We begin with the raw amino-acid sequence, 1080 residues long: Presequence protease 1, chloroplastic/mitochondrial (1080 aa).

A chloroplast and mitochondrion-targeting transit peptide spans 1 to 85 (MLRTVSCLAS…GQFSRLSVRA (85 aa)). An N-acetylvaline modification is found at V86. H162 serves as a coordination point for Zn(2+). E165 (proton acceptor) is an active-site residue. H166 serves as a coordination point for Zn(2+). Residue E240 is part of the active site. Position 262 (E262) interacts with Zn(2+). Residues 571–612 (EKATQEEVEEKNILEKVKAAMTEEDLAELARATEELKLKQET) are a coiled coil. R705 is a Mg(2+) binding site.

This sequence belongs to the peptidase M16 family. PreP subfamily. In terms of assembly, homodimer. It depends on Zn(2+) as a cofactor. Mg(2+) serves as cofactor. In terms of tissue distribution, expressed only in siliques and flowers.

The protein localises to the plastid. Its subcellular location is the chloroplast stroma. It is found in the mitochondrion matrix. Its activity is regulated as follows. Inactive in the absence of MgCl(2) and CaCl(2) and full activation at 10 mM concentrations of either ion. Completely inhibited by the metal chelator orthophenanthroline, but not affected by phenylmethylsulfonyl fluoride (PMSF) or N-ethylmaleimide (NEM). Functionally, ATP-independent protease that degrades both mitochondrial and chloroplastic transit peptides after their cleavage. Also degrades other unstructured peptides. Specific for peptides in the range of 10 to 65 residues. Shows a preference for cleavage after small polar residues and before basic residues, with a bias for positively charged amino acid residues. The protein is Presequence protease 1, chloroplastic/mitochondrial (PREP1) of Arabidopsis thaliana (Mouse-ear cress).